Here is a 146-residue protein sequence, read N- to C-terminus: Hemoglobin subunit beta (146 aa).

Positions 2–146 (HWSAEEKQLI…VAHALARKYH (145 aa)) constitute a Globin domain. Heme b is bound by residues histidine 63 and histidine 92.

This sequence belongs to the globin family. Heterotetramer of two alpha chains and two beta chains. In terms of tissue distribution, red blood cells.

Its function is as follows. Involved in oxygen transport from the lung to the various peripheral tissues. The sequence is that of Hemoglobin subunit beta (HBB) from Phoenicopterus ruber (American flamingo).